A 198-amino-acid polypeptide reads, in one-letter code: dCTP deaminase, dUMP-forming (198 aa).

DCTP contacts are provided by residues K115–R120, D133, T141–E143, Q162, Y175, and K184. Residue E143 is the Proton donor/acceptor of the active site.

It belongs to the dCTP deaminase family. In terms of assembly, homotrimer.

It catalyses the reaction dCTP + 2 H2O = dUMP + NH4(+) + diphosphate. The protein operates within pyrimidine metabolism; dUMP biosynthesis; dUMP from dCTP: step 1/1. Its function is as follows. Bifunctional enzyme that catalyzes both the deamination of dCTP to dUTP and the hydrolysis of dUTP to dUMP without releasing the toxic dUTP intermediate. This chain is dCTP deaminase, dUMP-forming, found in Nanoarchaeum equitans (strain Kin4-M).